We begin with the raw amino-acid sequence, 123 residues long: ATP synthase epsilon chain (123 aa).

This sequence belongs to the ATPase epsilon chain family. F-type ATPases have 2 components, CF(1) - the catalytic core - and CF(0) - the membrane proton channel. CF(1) has five subunits: alpha(3), beta(3), gamma(1), delta(1), epsilon(1). CF(0) has three main subunits: a, b and c.

The protein localises to the cell inner membrane. Functionally, produces ATP from ADP in the presence of a proton gradient across the membrane. This chain is ATP synthase epsilon chain (atpC), found in Helicobacter pylori (strain ATCC 700392 / 26695) (Campylobacter pylori).